Here is a 30-residue protein sequence, read N- to C-terminus: Alanine carboxypeptidase (30 aa).

The catalysed reaction is Release of a C-terminal alanine from a peptide or a variety of pteroyl or acyl groups.. This Geobacillus stearothermophilus (Bacillus stearothermophilus) protein is Alanine carboxypeptidase.